The sequence spans 293 residues: Nucleotide-binding protein BCQ_4976 (293 aa).

Position 14–21 (14–21 (GMSGAGKT)) interacts with ATP. A GTP-binding site is contributed by 65–68 (DLRG).

This sequence belongs to the RapZ-like family.

Functionally, displays ATPase and GTPase activities. The polypeptide is Nucleotide-binding protein BCQ_4976 (Bacillus cereus (strain Q1)).